We begin with the raw amino-acid sequence, 520 residues long: Developmental regulatory protein wetA (520 aa).

Disordered regions lie at residues Gly49 to Ser72, Val104 to Ser165, Gln236 to Asp295, Asp367 to Lys453, and Leu471 to Lys496. Composition is skewed to polar residues over residues Ser63–Ser72, Val104–Leu114, and Gln155–Ser165. Over residues Ser237–Ala251 the composition is skewed to low complexity. Residues Arg252–Pro261 are compositionally biased toward polar residues. A compositionally biased stretch (low complexity) spans Ser262 to Asp295. The segment covering Asp367 to Leu401 has biased composition (polar residues). Positions Pro420 to Lys429 are enriched in basic residues. The span at Asn436–Lys453 shows a compositional bias: low complexity.

Belongs to the wetA family.

Its function is as follows. BrlA, abaA and wetA are pivotal regulators of conidiophore development and conidium maturation. They act individually and together to regulate their own expression and that of numerous other sporulation-specific genes. Responsible for activating a set of genes whose products make up the final two conidial wall layers or direct their assembly and though this activity is responsible for acquisition of spore dormancy. This Penicillium rubens (strain ATCC 28089 / DSM 1075 / NRRL 1951 / Wisconsin 54-1255) (Penicillium chrysogenum) protein is Developmental regulatory protein wetA.